The following is a 114-amino-acid chain: PDZK1-interacting protein 1 (114 aa).

Topologically, residues methionine 1–glutamine 28 are extracellular. A helical membrane pass occupies residues proline 29–asparagine 51. Topologically, residues histidine 52–methionine 114 are cytoplasmic. Serine 85 is subject to Phosphoserine. A disordered region spans residues glutamate 94–methionine 114. The span at glutamate 105–methionine 114 shows a compositional bias: basic and acidic residues.

This sequence belongs to the PDZK1-interacting protein 1/SMIM24 family. Forms a heterodimer (via N-terminal transmembrane helix) with SLC5A2/SGLT2 (via TM13); this interaction enhances SLC5A2 transporter activity. Interacts with PDZK1.

The protein localises to the apical cell membrane. In terms of biological role, auxiliary protein of electrogenic Na(+)-coupled sugar symporter SLC5A2/SGLT2 and SLC5A1/SGLT1. Essential for the transporter activity of SLC5A2/SGLT2 but not SLC5A1/SGLT1. The sequence is that of PDZK1-interacting protein 1 from Homo sapiens (Human).